Consider the following 374-residue polypeptide: Chaperone protein DnaJ (374 aa).

One can recognise a J domain in the interval 6–70 (DYYDILGVSK…QKRAQYDQFG (65 aa)). The CR-type zinc finger occupies 135–217 (GKKTTIKYSR…CGGTGHTSQQ (83 aa)). Zn(2+) is bound by residues Cys148, Cys151, Cys165, Cys168, Cys191, Cys194, Cys205, and Cys208. CXXCXGXG motif repeat units follow at residues 148-155 (CKTCGGSG), 165-172 (CHKCNGTG), 191-198 (CDVCNGTG), and 205-212 (CPTCGGTG). 2 disordered regions span residues 308–328 (GTNF…GTGD) and 347–374 (EALK…KFMN).

It belongs to the DnaJ family. In terms of assembly, homodimer. Zn(2+) serves as cofactor.

The protein localises to the cytoplasm. Functionally, participates actively in the response to hyperosmotic and heat shock by preventing the aggregation of stress-denatured proteins and by disaggregating proteins, also in an autonomous, DnaK-independent fashion. Unfolded proteins bind initially to DnaJ; upon interaction with the DnaJ-bound protein, DnaK hydrolyzes its bound ATP, resulting in the formation of a stable complex. GrpE releases ADP from DnaK; ATP binding to DnaK triggers the release of the substrate protein, thus completing the reaction cycle. Several rounds of ATP-dependent interactions between DnaJ, DnaK and GrpE are required for fully efficient folding. Also involved, together with DnaK and GrpE, in the DNA replication of plasmids through activation of initiation proteins. This Pediococcus pentosaceus (strain ATCC 25745 / CCUG 21536 / LMG 10740 / 183-1w) protein is Chaperone protein DnaJ.